The sequence spans 95 residues: Signal recognition particle 19 kDa protein (95 aa).

The protein belongs to the SRP19 family. As to quaternary structure, part of the signal recognition particle protein translocation system, which is composed of SRP and FtsY. Archaeal SRP consists of a 7S RNA molecule of 300 nucleotides and two protein subunits: SRP54 and SRP19.

It localises to the cytoplasm. Its function is as follows. Involved in targeting and insertion of nascent membrane proteins into the cytoplasmic membrane. Binds directly to 7S RNA and mediates binding of the 54 kDa subunit of the SRP. This chain is Signal recognition particle 19 kDa protein, found in Methanococcoides burtonii (strain DSM 6242 / NBRC 107633 / OCM 468 / ACE-M).